Consider the following 342-residue polypeptide: Dihydroorotate dehydrogenase (quinone) (342 aa).

Residues 60 to 64 (AGLDK) and T84 each bind FMN. K64 contributes to the substrate binding site. Residue 109-113 (NRMGF) participates in substrate binding. 2 residues coordinate FMN: N137 and N170. Residue N170 participates in substrate binding. Catalysis depends on S173, which acts as the Nucleophile. N175 is a binding site for substrate. FMN-binding residues include K215 and T243. 244–245 (NT) contributes to the substrate binding site. FMN-binding positions include G266, G295, and 316–317 (YS).

Belongs to the dihydroorotate dehydrogenase family. Type 2 subfamily. In terms of assembly, monomer. The cofactor is FMN.

Its subcellular location is the cell membrane. It carries out the reaction (S)-dihydroorotate + a quinone = orotate + a quinol. It functions in the pathway pyrimidine metabolism; UMP biosynthesis via de novo pathway; orotate from (S)-dihydroorotate (quinone route): step 1/1. Its function is as follows. Catalyzes the conversion of dihydroorotate to orotate with quinone as electron acceptor. This Nitrosomonas eutropha (strain DSM 101675 / C91 / Nm57) protein is Dihydroorotate dehydrogenase (quinone).